The primary structure comprises 329 residues: GTP 3',8-cyclase (329 aa).

The region spanning methionine 1–alanine 229 is the Radical SAM core domain. Arginine 8 is a GTP binding site. Positions 15 and 19 each coordinate [4Fe-4S] cluster. Tyrosine 21 is an S-adenosyl-L-methionine binding site. Residue cysteine 22 coordinates [4Fe-4S] cluster. Arginine 60 contacts GTP. S-adenosyl-L-methionine is bound at residue glycine 64. GTP is bound at residue threonine 91. Serine 115 contributes to the S-adenosyl-L-methionine binding site. Lysine 155 contacts GTP. Methionine 189 contacts S-adenosyl-L-methionine. 2 residues coordinate [4Fe-4S] cluster: cysteine 252 and cysteine 255. Arginine 257 to arginine 259 provides a ligand contact to GTP. [4Fe-4S] cluster is bound at residue cysteine 269.

This sequence belongs to the radical SAM superfamily. MoaA family. In terms of assembly, monomer and homodimer. [4Fe-4S] cluster serves as cofactor.

The enzyme catalyses GTP + AH2 + S-adenosyl-L-methionine = (8S)-3',8-cyclo-7,8-dihydroguanosine 5'-triphosphate + 5'-deoxyadenosine + L-methionine + A + H(+). It participates in cofactor biosynthesis; molybdopterin biosynthesis. Its function is as follows. Catalyzes the cyclization of GTP to (8S)-3',8-cyclo-7,8-dihydroguanosine 5'-triphosphate. The sequence is that of GTP 3',8-cyclase from Microcystis aeruginosa (strain NIES-843 / IAM M-2473).